The sequence spans 291 residues: m-AAA protease-interacting protein 1, mitochondrial (291 aa).

A mitochondrion-targeting transit peptide spans 1-96; that stretch reads MALAARLLPQ…SFPACPQRSY (96 aa).

Interacts with AFG3L2. Interacts with SPG7. Interacts with SMDT1/EMRE (via the N-terminal transit peptide); interaction is direct and takes place before maturation of SMDT1/EMRE.

It localises to the mitochondrion matrix. Promotes sorting of SMDT1/EMRE in mitochondria by ensuring its maturation. Interacts with the transit peptide region of SMDT1/EMRE precursor protein in the mitochondrial matrix, leading to protect it against protein degradation by YME1L1, thereby ensuring SMDT1/EMRE maturation by the mitochondrial processing peptidase (PMPCA and PMPCB). In Homo sapiens (Human), this protein is m-AAA protease-interacting protein 1, mitochondrial.